The primary structure comprises 180 residues: Ribulose bisphosphate carboxylase small subunit, chloroplastic 2 (180 aa).

Residues 1–56 constitute a chloroplast transit peptide; the sequence is MASSVISSAAVATRSNVTQASMVAPFTGLKSSATFPVTKKQNLDITSIASNGGRVS.

It belongs to the RuBisCO small chain family. Heterohexadecamer of 8 large and 8 small subunits. As to quaternary structure, (Microbial infection) Binds to tobamovirus movement protein; this interaction seems required for viral systemic movement.

It localises to the plastid. The protein resides in the chloroplast. It is found in the cell junction. Its subcellular location is the plasmodesma. Its function is as follows. RuBisCO catalyzes two reactions: the carboxylation of D-ribulose 1,5-bisphosphate, the primary event in carbon dioxide fixation, as well as the oxidative fragmentation of the pentose substrate. Both reactions occur simultaneously and in competition at the same active site. Although the small subunit is not catalytic it is essential for maximal activity. Involved in antiviral defenses. This chain is Ribulose bisphosphate carboxylase small subunit, chloroplastic 2, found in Solanum lycopersicum (Tomato).